The sequence spans 279 residues: Energy-coupling factor transporter ATP-binding protein EcfA2 (279 aa).

In terms of domain architecture, ABC transporter spans 3–245 (ITLKNVSYTY…LDFMESIQLG (243 aa)). An ATP-binding site is contributed by 40–47 (GHTGSGKS).

Belongs to the ABC transporter superfamily. Energy-coupling factor EcfA family. In terms of assembly, forms a stable energy-coupling factor (ECF) transporter complex composed of 2 membrane-embedded substrate-binding proteins (S component), 2 ATP-binding proteins (A component) and 2 transmembrane proteins (T component).

The protein resides in the cell membrane. ATP-binding (A) component of a common energy-coupling factor (ECF) ABC-transporter complex. Unlike classic ABC transporters this ECF transporter provides the energy necessary to transport a number of different substrates. The protein is Energy-coupling factor transporter ATP-binding protein EcfA2 of Streptococcus sanguinis (strain SK36).